The following is an 83-amino-acid chain: UPF0297 protein DSY2420 (83 aa).

This sequence belongs to the UPF0297 family.

In Desulfitobacterium hafniense (strain Y51), this protein is UPF0297 protein DSY2420.